A 317-amino-acid polypeptide reads, in one-letter code: Melanocyte-stimulating hormone receptor (317 aa).

At 1-37 the chain is on the extracellular side; that stretch reads MPVQGSQRRLLGSLNSTPTAPPHLGLAANQTGARCLE. Residue N29 is glycosylated (N-linked (GlcNAc...) asparagine). Residues 38–63 form a helical membrane-spanning segment; it reads VSIPDGLFLSLGLVSLVENVLVVTAI. The Cytoplasmic segment spans residues 64–72; it reads AKNRNLHSP. The helical transmembrane segment at 73 to 93 threads the bilayer; sequence MYCFICCLALSDLLVSGSNML. Over 94–118 the chain is Extracellular; the sequence is ETAVILLLEAGALAARAAVVQQLDN. Residues 119–140 traverse the membrane as a helical segment; that stretch reads VIDVITCSSMLSSLCFLGAIAV. Residues 141 to 163 are Cytoplasmic-facing; sequence DRYISIFYALRYHSIVTLPRARR. Residues 164-183 traverse the membrane as a helical segment; sequence AVAAIWVASVLFSMLFIAYY. At 184–191 the chain is on the extracellular side; that stretch reads DHAAVLLC. Residues 192–211 form a helical membrane-spanning segment; that stretch reads LVVFFLAMLVLMAVLYIHML. Over 212-240 the chain is Cytoplasmic; it reads VRACQHAQGIARLHKRQRPAHQGFGLKGA. A helical transmembrane segment spans residues 241–266; that stretch reads ATLTILLGIFFLCWGPFFLHLTLIVL. The Extracellular segment spans residues 267–279; the sequence is CPQHPTCSCIFKN. Residues 280 to 300 form a helical membrane-spanning segment; that stretch reads FNLFLALIICNAIIDPLIYAF. At 301-317 the chain is on the cytoplasmic side; sequence RSQELRRTLKEVLLCSW. C315 is lipidated: S-palmitoyl cysteine.

Belongs to the G-protein coupled receptor 1 family. In terms of assembly, interacts with MGRN1, but does not undergo MGRN1-mediated ubiquitination; this interaction competes with GNAS-binding and thus inhibits agonist-induced cAMP production. Interacts with OPN3; the interaction results in a decrease in MC1R-mediated cAMP signaling and ultimately a decrease in melanin production in melanocytes.

It is found in the cell membrane. Functionally, receptor for MSH (alpha, beta and gamma) and ACTH. The activity of this receptor is mediated by G proteins which activate adenylate cyclase. Mediates melanogenesis, the production of eumelanin (black/brown) and phaeomelanin (red/yellow), via regulation of cAMP signaling in melanocytes. The polypeptide is Melanocyte-stimulating hormone receptor (MC1R) (Cercopithecus diana (Diana monkey)).